The primary structure comprises 161 residues: MGTTWRSPGLVRLALCLAGLALSLYALHVKAARARDENYRALCDVGTAISCSRVFSSRWGRGFGLVEHMLGADSVLNQSNSIFGCLFYTLQLLLGCLRGRWASILLVLSSLVSVAGSVYLAWILFFVLYDFCIVCITTYAINVGLMLLSFQKVPEHKTKKH.

Residues 1-9 (MGTTWRSPG) are Cytoplasmic-facing. A helical transmembrane segment spans residues 10-29 (LVRLALCLAGLALSLYALHV). The Lumenal segment spans residues 30 to 80 (KAARARDENYRALCDVGTAISCSRVFSSRWGRGFGLVEHMLGADSVLNQSN). C43 and C51 are oxidised to a cystine. N80 is a (S)-warfarin binding site. The chain crosses the membrane as a helical span at residues 81–95 (SIFGCLFYTLQLLLG). The Cytoplasmic portion of the chain corresponds to 96–100 (CLRGR). A helical membrane pass occupies residues 101 to 128 (WASILLVLSSLVSVAGSVYLAWILFFVL). Residues 129–131 (YDF) lie on the Lumenal side of the membrane. Residues C132 and C135 are joined by a disulfide bond. A helical transmembrane segment spans residues 132–153 (CIVCITTYAINVGLMLLSFQKV). Phylloquinone contacts are provided by C135 and Y139. (S)-warfarin is bound at residue Y139. The Cytoplasmic segment spans residues 154-161 (PEHKTKKH).

The protein belongs to the VKOR family. In terms of tissue distribution, detected in liver.

Its subcellular location is the endoplasmic reticulum membrane. It carries out the reaction phylloquinone + [protein]-disulfide + H2O = 2,3-epoxyphylloquinone + [protein]-dithiol. The catalysed reaction is phylloquinol + [protein]-disulfide = phylloquinone + [protein]-dithiol. Its activity is regulated as follows. Inhibited by warfarin (coumadin). Warfarin locks VKORC1 in both redox states into the closed conformation. Its function is as follows. Involved in vitamin K metabolism. Catalytic subunit of the vitamin K epoxide reductase (VKOR) complex which reduces inactive vitamin K 2,3-epoxide to active vitamin K. Vitamin K is required for the gamma-carboxylation of various proteins, including clotting factors, and is required for normal blood coagulation, but also for normal bone development. The protein is Vitamin K epoxide reductase complex subunit 1 (Vkorc1) of Mus musculus (Mouse).